We begin with the raw amino-acid sequence, 234 residues long: 2,3,4,5-tetrahydropyridine-2,6-dicarboxylate N-acetyltransferase (234 aa).

Belongs to the transferase hexapeptide repeat family. DapH subfamily.

It catalyses the reaction (S)-2,3,4,5-tetrahydrodipicolinate + acetyl-CoA + H2O = L-2-acetamido-6-oxoheptanedioate + CoA. The protein operates within amino-acid biosynthesis; L-lysine biosynthesis via DAP pathway; LL-2,6-diaminopimelate from (S)-tetrahydrodipicolinate (acetylase route): step 1/3. Functionally, catalyzes the transfer of an acetyl group from acetyl-CoA to tetrahydrodipicolinate. The sequence is that of 2,3,4,5-tetrahydropyridine-2,6-dicarboxylate N-acetyltransferase from Ligilactobacillus salivarius (strain UCC118) (Lactobacillus salivarius).